We begin with the raw amino-acid sequence, 391 residues long: Tryptophan synthase beta chain (391 aa).

Position 86 is an N6-(pyridoxal phosphate)lysine (Lys-86).

It belongs to the TrpB family. Tetramer of two alpha and two beta chains. Requires pyridoxal 5'-phosphate as cofactor.

The catalysed reaction is (1S,2R)-1-C-(indol-3-yl)glycerol 3-phosphate + L-serine = D-glyceraldehyde 3-phosphate + L-tryptophan + H2O. The protein operates within amino-acid biosynthesis; L-tryptophan biosynthesis; L-tryptophan from chorismate: step 5/5. In terms of biological role, the beta subunit is responsible for the synthesis of L-tryptophan from indole and L-serine. This is Tryptophan synthase beta chain from Vibrio metschnikovii.